A 74-amino-acid polypeptide reads, in one-letter code: MKHIFILLIRFYQRFISPLKPPTCRFYPTCSHYGLEAIRRFGALKGGYLTIKRILKCHPFHPGGFDPVPEKEQK.

This sequence belongs to the UPF0161 family.

Its subcellular location is the cell membrane. Functionally, could be involved in insertion of integral membrane proteins into the membrane. The chain is Putative membrane protein insertion efficiency factor from Anoxybacillus flavithermus (strain DSM 21510 / WK1).